The chain runs to 362 residues: DNA replication and repair protein RecF (362 aa).

31–38 (GDNAAGKT) contacts ATP.

The protein belongs to the RecF family.

It localises to the cytoplasm. Its function is as follows. The RecF protein is involved in DNA metabolism; it is required for DNA replication and normal SOS inducibility. RecF binds preferentially to single-stranded, linear DNA. It also seems to bind ATP. This Hydrogenovibrio crunogenus (strain DSM 25203 / XCL-2) (Thiomicrospira crunogena) protein is DNA replication and repair protein RecF.